A 180-amino-acid chain; its full sequence is Oligoribonuclease (180 aa).

The 162-residue stretch at 7–168 (LVWIDLEMTG…QDIRDSIDEL (162 aa)) folds into the Exonuclease domain. Residue tyrosine 128 is part of the active site.

The protein belongs to the oligoribonuclease family.

It localises to the cytoplasm. In terms of biological role, 3'-to-5' exoribonuclease specific for small oligoribonucleotides. The polypeptide is Oligoribonuclease (Dichelobacter nodosus (strain VCS1703A)).